We begin with the raw amino-acid sequence, 332 residues long: Ribosomal RNA small subunit methyltransferase H (332 aa).

Residues 36 to 38, aspartate 54, phenylalanine 81, aspartate 102, and glutamine 109 each bind S-adenosyl-L-methionine; that span reads GGY.

This sequence belongs to the methyltransferase superfamily. RsmH family.

It localises to the cytoplasm. It catalyses the reaction cytidine(1402) in 16S rRNA + S-adenosyl-L-methionine = N(4)-methylcytidine(1402) in 16S rRNA + S-adenosyl-L-homocysteine + H(+). Specifically methylates the N4 position of cytidine in position 1402 (C1402) of 16S rRNA. The sequence is that of Ribosomal RNA small subunit methyltransferase H from Nitrobacter winogradskyi (strain ATCC 25391 / DSM 10237 / CIP 104748 / NCIMB 11846 / Nb-255).